Consider the following 263-residue polypeptide: Ribonuclease HII (263 aa).

The RNase H type-2 domain maps to 71 to 262 (QAIAGIDEVG…VKSMCCDSTN (192 aa)). Asp77, Glu78, and Asp172 together coordinate a divalent metal cation.

Belongs to the RNase HII family. The cofactor is Mn(2+). Mg(2+) is required as a cofactor.

Its subcellular location is the cytoplasm. It catalyses the reaction Endonucleolytic cleavage to 5'-phosphomonoester.. Its function is as follows. Endonuclease that specifically degrades the RNA of RNA-DNA hybrids. This Streptococcus pyogenes serotype M5 (strain Manfredo) protein is Ribonuclease HII.